The chain runs to 539 residues: uncharacterized protein (539 aa).

The active-site Acyl-ester intermediate is the S216.

This sequence belongs to the type-B carboxylesterase/lipase family.

It localises to the cytoplasm. The protein localises to the nucleus. This is an uncharacterized protein from Schizosaccharomyces pombe (strain 972 / ATCC 24843) (Fission yeast).